The sequence spans 446 residues: MAHVITRINAREILDSRGNPTVEVDLETNLGIFRAAVPSGASTGIYEALELRDNDKSRYLGKGVQKAIKNINEIIAPKLIGMNCTEQKKIDNLMVEELDGSKNEWGWSKSKLGANAILAISMAVCRAGAAPNKVSLYKYLAQLAGKKSDQMVLPVPCLNVINGGSHAGNKLSFQEFMIVPVGAPSFKEALRYGAEVYHTLKSEIKKKYGIDATNVGDEGGFAPNILNANEALDLLVTAIKSAGYEGKVKIAMDVAASEFYNSENKTYDLDFKTPNNDKSLVKTGAQLVDLYIDLVKKYPIVSIEDPFDQDDWENYAKLTAAIGKDVQIVGDDLLVTNPTRITKALEKNACNALLLKVNQIGSITEAIEACLLSQKNNWGVMVSHRSGETEDVFIADLVVALRTGQIKTGAPCRSERNAKYNQLLRIEESLGNNAVFAGEKFRLQLN.

Mg(2+) is bound at residue serine 42. Position 42 is a phosphoserine (serine 42). The Pentapeptide insert signature appears at 104–108; that stretch reads EWGWS. Position 133 is an N6-acetyllysine (lysine 133). Lysine 138 is covalently cross-linked (Glycyl lysine isopeptide (Lys-Gly) (interchain with G-Cter in ubiquitin)). Phosphotyrosine is present on tyrosine 139. Histidine 166 and glutamate 175 together coordinate substrate. Glutamate 218 serves as the catalytic Proton donor. A Mg(2+)-binding site is contributed by aspartate 253. The short motif at 277–282 is the DKSLVK motif element; it reads DKSLVK. Residues glutamate 304 and aspartate 331 each contribute to the Mg(2+) site. 2 residues coordinate substrate: glutamate 304 and aspartate 331. Threonine 339 is modified (phosphothreonine). Lysine 356 (proton acceptor) is an active-site residue. An N6-acetyllysine modification is found at lysine 375. Substrate contacts are provided by residues 383–386 and lysine 407; that span reads SHRS.

This sequence belongs to the enolase family. As to quaternary structure, homodimer. Forms a complex at least composed of DegP, ENO and HSP70. Interacts with G-actin. Interacts (via the DKSLVK motif) with mammalian host PLG/plasminogen (present in the mosquito blood meal); the interaction occurs at the ookinete cell surface and is required for ookinete invasion of the mosquito midgut. Interacts with A.gambiae EBP; depending on the Plasmodium species, the interaction is either involved in ookinete invasion of the mosquito midgut (P.berghei) or is dispensable (P.falciparum). It depends on Mg(2+) as a cofactor.

It is found in the cytoplasm. It localises to the nucleus. Its subcellular location is the cytoskeleton. The protein localises to the cell surface. The protein resides in the cell membrane. It is found in the vacuole. The enzyme catalyses (2R)-2-phosphoglycerate = phosphoenolpyruvate + H2O. The protein operates within carbohydrate degradation; glycolysis; pyruvate from D-glyceraldehyde 3-phosphate: step 4/5. In terms of biological role, glycolytic enzyme that catalyzes the conversion of 2-phosphoglycerate to phosphoenolpyruvate. In addition to glycolysis, involved in various processes such as parasite development and invasion. Plays an essential role during ookinete invasion of the mosquito vector midgut by mediating the interaction of the ookinete with the midgut epithelium and, further, by binding to mammalian host plasminogen in the blood meal, whose conversion to active plasmin promotes the invasion process. The chain is Enolase from Plasmodium falciparum.